We begin with the raw amino-acid sequence, 530 residues long: Berberine bridge enzyme-like 4 (530 aa).

Positions 1 to 19 are cleaved as a signal peptide; it reads MKGTLSVLCLVLLVSVLEA. The cysteines at positions 32 and 95 are disulfide-linked. A glycan (N-linked (GlcNAc...) asparagine) is linked at asparagine 52. The FAD-binding PCMH-type domain maps to 73–247; that stretch reads NYRKLLAIVA…LSWKINLVDV (175 aa). Positions 110-172 form a cross-link, 6-(S-cysteinyl)-8alpha-(pros-histidyl)-FAD (His-Cys); that stretch reads HDYEGLSYMS…QTLAFPAGVC (63 aa). N-linked (GlcNAc...) asparagine glycosylation is found at asparagine 257, asparagine 292, asparagine 341, and asparagine 441.

It belongs to the oxygen-dependent FAD-linked oxidoreductase family. Requires FAD as cofactor. The FAD cofactor is bound via a bicovalent 6-S-cysteinyl, 8alpha-N1-histidyl FAD linkage.

The protein localises to the secreted. It localises to the cell wall. In terms of biological role, probable flavin-dependent oxidoreductase. The polypeptide is Berberine bridge enzyme-like 4 (Arabidopsis thaliana (Mouse-ear cress)).